Reading from the N-terminus, the 166-residue chain is HTH-type transcriptional regulator PetP (166 aa).

One can recognise an HTH marR-type domain in the interval 17–152 (DEQLRKGIEA…FRQVLEAMMD (136 aa)). A DNA-binding region (H-T-H motif) is located at residues 66 to 89 (VTTLISVLGVTKQSLNRVLRTLID).

Functionally, necessary for photosynthetic and respiratory growth. The chain is HTH-type transcriptional regulator PetP (petP) from Rhodobacter capsulatus (strain ATCC BAA-309 / NBRC 16581 / SB1003).